A 283-amino-acid chain; its full sequence is Phosphatidylglycerol--prolipoprotein diacylglyceryl transferase (283 aa).

7 helical membrane-spanning segments follow: residues 18 to 38, 59 to 79, 91 to 111, 124 to 144, 185 to 205, 213 to 233, and 251 to 271; these read LFGH…IILG, LAVY…VLFY, IFVT…IIIA, ILWV…MIRL, TQIY…WLYW, YSGL…FIIE, and GLNM…WLII. Arginine 143 lines the a 1,2-diacyl-sn-glycero-3-phospho-(1'-sn-glycerol) pocket.

It belongs to the Lgt family.

The protein localises to the cell inner membrane. The catalysed reaction is L-cysteinyl-[prolipoprotein] + a 1,2-diacyl-sn-glycero-3-phospho-(1'-sn-glycerol) = an S-1,2-diacyl-sn-glyceryl-L-cysteinyl-[prolipoprotein] + sn-glycerol 1-phosphate + H(+). Its pathway is protein modification; lipoprotein biosynthesis (diacylglyceryl transfer). In terms of biological role, catalyzes the transfer of the diacylglyceryl group from phosphatidylglycerol to the sulfhydryl group of the N-terminal cysteine of a prolipoprotein, the first step in the formation of mature lipoproteins. The chain is Phosphatidylglycerol--prolipoprotein diacylglyceryl transferase from Porphyromonas gingivalis (strain ATCC 33277 / DSM 20709 / CIP 103683 / JCM 12257 / NCTC 11834 / 2561).